A 355-amino-acid chain; its full sequence is Neutral protease 2 homolog MEP6 (355 aa).

The signal sequence occupies residues 1 to 19 (MRLSSSLIALVALAGQALA). A propeptide spanning residues 20-179 (LPFNELAERD…ASAIPELNKR (160 aa)) is cleaved from the precursor. 2 disulfide bridges follow: C187–C259 and C266–C283. Zn(2+) is bound at residue H307. E308 is a catalytic residue. Residues H311 and D322 each contribute to the Zn(2+) site.

Belongs to the peptidase M35 family. It depends on Zn(2+) as a cofactor.

It is found in the secreted. It catalyses the reaction Preferential cleavage of bonds with hydrophobic residues in P1'. Also 3-Asn-|-Gln-4 and 8-Gly-|-Ser-9 bonds in insulin B chain.. In terms of biological role, secreted metalloproteinase that allows assimilation of proteinaceous substrates. Shows high activities on basic nuclear substrates such as histone and protamine. May be involved in virulence. In Coccidioides posadasii (strain C735) (Valley fever fungus), this protein is Neutral protease 2 homolog MEP6 (MEP6).